Here is an 818-residue protein sequence, read N- to C-terminus: Sodium/hydrogen exchanger 1 (818 aa).

Residues 1–98 lie on the Extracellular side of the membrane; the sequence is MLLWPGASGL…FPVLGIDYQH (98 aa). A disordered region spans residues 44 to 76; sequence STIRGSEPPRERSIGDVTTAPPELAPESRPVNH. Asparagine 75 carries an N-linked (GlcNAc...) asparagine glycan. Residues 99–121 traverse the membrane as a helical segment; it reads VRIPFEIALWILLACLMKIGFHV. Topologically, residues 122-130 are cytoplasmic; sequence IPTISSIVP. Residues 131–148 traverse the membrane as a helical segment; sequence ESCLLIVVGLLVGGLIKG. Topologically, residues 149–158 are extracellular; sequence VGETPPILQS. A helical membrane pass occupies residues 159-176; that stretch reads EVFFLFLLPPIILDAGYF. Over 177–186 the chain is Cytoplasmic; it reads LPLRQFTENL. Residues 187-215 traverse the membrane as a helical segment; that stretch reads GTILIFAVVGTLWNAFFLGGLMYAVCLVG. The Extracellular portion of the chain corresponds to 216–222; sequence GEQINNI. The chain crosses the membrane as a helical span at residues 223 to 249; that stretch reads GLLENLLFGSIISAVDPVAVLAVFEEI. Residues 250 to 252 lie on the Cytoplasmic side of the membrane; that stretch reads HIN. A helical transmembrane segment spans residues 253-283; sequence ELLHILVFGESLLNDAVTVVLYHLFEEFANY. At 284-287 the chain is on the extracellular side; that stretch reads DRVG. Residues 288 to 322 traverse the membrane as a helical segment; it reads IVDIILGFLSFFVVSLGGVFVGVVYGVIAAFTSRF. Topologically, residues 323-328 are cytoplasmic; the sequence is TSHIRV. A helical membrane pass occupies residues 329-341; the sequence is IEPLFVFLYSYMA. Over 342–350 the chain is Extracellular; the sequence is YLSAELFHL. A helical membrane pass occupies residues 351-371; it reads SGIMALIASGVVMRPYVEANI. Topologically, residues 372–373 are cytoplasmic; it reads SH. Residues 374 to 404 traverse the membrane as a helical segment; the sequence is KSHTTIKYFLKMWSSVSETLIFIFLGVSTVA. Over 405–410 the chain is Extracellular; sequence GSHHWN. The chain crosses the membrane as a helical span at residues 411-438; the sequence is WTFVISTLLFCLIARVLGVLGLTWFINK. Topologically, residues 439–444 are cytoplasmic; it reads FRIVKL. Residues 445 to 469 form a helical membrane-spanning segment; that stretch reads TPKDQFIIAYGGLRGAIAFSLGYLL. Over 470-475 the chain is Extracellular; that stretch reads DKKHFP. The helical transmembrane segment at 476 to 505 threads the bilayer; that stretch reads MCDLFLTAIITVIFFTVFVQGMTIRPLVDL. An interaction with TESC region spans residues 503 to 545; it reads VDLLAVKKKQETKRSINEEIHTQFLDHLLTGIEDICGHYGHHH. At 506–818 the chain is on the cytoplasmic side; it reads LAVKKKQETK…EGEPFIPKGQ (313 aa). Residues 509-516 form a PI(4,5)P2-binding region region; it reads KKKQETKR. Residues 515–545 form an interaction with CHP2 region; the sequence is KRSINEEIHTQFLDHLLTGIEDICGHYGHHH. The confers pH-dependent PI(4,5)P2 binding stretch occupies residues 540–545; sequence HYGHHH. The tract at residues 552–560 is PI(4,5)P2-binding region; that stretch reads RFNKKYVKK. Residues serine 599 and serine 602 each carry the phosphoserine modification. Residue threonine 603 is modified to Phosphothreonine. Serine 605 and serine 648 each carry phosphoserine. Positions 633-818 are interaction with TESC; it reads KILRNNLQKT…EGEPFIPKGQ (186 aa). The tract at residues 633–818 is interaction with CALM1; that stretch reads KILRNNLQKT…EGEPFIPKGQ (186 aa). Residues 684 to 687 form an interaction with PPP3CA region; sequence LTVP. Residues serine 693, serine 697, and serine 703 each carry the phosphoserine modification. The interaction with PPP3CA stretch occupies residues 715–720; the sequence is PVITID. Residues serine 723, serine 726, and serine 729 each carry the phosphoserine modification. A disordered region spans residues 741–818; it reads VLGLSRDPGR…EGEPFIPKGQ (78 aa). Threonine 782 is modified (phosphothreonine). A compositionally biased stretch (polar residues) spans 785–794; sequence PSDSPSSQRI. Phosphoserine is present on residues serine 788, serine 790, and serine 799.

It belongs to the monovalent cation:proton antiporter 1 (CPA1) transporter (TC 2.A.36) family. In terms of assembly, homodimer; dimerization is crucial for its function. Oligomer. Interacts with CALM in a calcium-dependent manner. Interacts with TESC. Interacts (via the juxtamembrane region of the cytoplasmic C-terminal domain) with CHP1; the interaction occurs at the plasma membrane in a calcium-dependent manner. Interacts with CHP2; the interaction occurs in a calcium-dependent manner. Interacts with EZR; regulates the cytoskeletal interactions of SLC9A1 and promotes stress fiber formation. Ubiquitinated, leading to its degradation by the proteasome. Ubiquitination is reduced by CHP1. Post-translationally, O-glycosylated. In terms of processing, palmitoylated; may play a major role in SLC9A1 regulation. Phosphorylation at Thr-782 increases SLC9A1 activity. Specifically dephosphorylated at Thr-782 by PPP3CA that negatively regulates SLC9A1 activity. Phosphorylation at Ser-648 by AKT1 reduces SLC9A1 binding to CALM1.

It localises to the cell membrane. The protein resides in the basolateral cell membrane. The enzyme catalyses Na(+)(in) + H(+)(out) = Na(+)(out) + H(+)(in). It catalyses the reaction Li(+)(out) + H(+)(in) = Li(+)(in) + H(+)(out). It carries out the reaction Li(+)(in) + Na(+)(out) = Li(+)(out) + Na(+)(in). Activated at acidic pHs. Inhibited by amiloride and 5-amino-substituted derivatives. Inhibited by cariporide and eniporide. Phosphatidylinositol 4,5-bisphosphate (PI(4,5)P2) and phosphatidylinositol 3,4,5-trisphosphate (PI(3,4,5)P3) bind and differentially regulate SLC9A1 activity. Electroneutral Na(+) /H(+) antiporter that extrudes Na(+) in exchange for external protons driven by the inward sodium ion chemical gradient, protecting cells from acidification that occurs from metabolism. Exchanges intracellular H(+) ions for extracellular Na(+) in 1:1 stoichiometry. Plays a key role in maintening intracellular pH neutral and cell volume, and thus is important for cell growth, proliferation, migration and survival. In addition, can transport lithium Li(+) and also functions as a Na(+)/Li(+) antiporter. SLC9A1 also functions in membrane anchoring and organization of scaffolding complexes that coordinate signaling inputs. In Bos taurus (Bovine), this protein is Sodium/hydrogen exchanger 1 (SLC9A1).